A 502-amino-acid polypeptide reads, in one-letter code: Polyadenylate-binding protein, cytoplasmic and nuclear (502 aa).

4 RRM domains span residues 14–90 (LTIY…KKDE), 96–176 (GNIF…LYNP), 191–275 (TNCF…KGQR), and 299–376 (KNLY…YFKN).

It belongs to the polyadenylate-binding protein type-1 family.

The protein resides in the cytoplasm. Its subcellular location is the nucleus. Functionally, binds the poly(A) tail of mRNA. Appears to be an important mediator of the multiple roles of the poly(A) tail in mRNA biogenesis, stability and translation. The protein is Polyadenylate-binding protein, cytoplasmic and nuclear (PAB1) of Encephalitozoon cuniculi (strain GB-M1) (Microsporidian parasite).